Reading from the N-terminus, the 218-residue chain is Thiopurine S-methyltransferase (218 aa).

W10, L45, E66, and R123 together coordinate S-adenosyl-L-methionine.

Belongs to the class I-like SAM-binding methyltransferase superfamily. TPMT family.

Its subcellular location is the cytoplasm. It catalyses the reaction S-adenosyl-L-methionine + a thiopurine = S-adenosyl-L-homocysteine + a thiopurine S-methylether.. The protein is Thiopurine S-methyltransferase of Pseudomonas fluorescens (strain SBW25).